The primary structure comprises 152 residues: Flagellar assembly factor FliW (152 aa).

It belongs to the FliW family. Interacts with translational regulator CsrA and flagellin(s).

It localises to the cytoplasm. Its function is as follows. Acts as an anti-CsrA protein, binds CsrA and prevents it from repressing translation of its target genes, one of which is flagellin. Binds to flagellin and participates in the assembly of the flagellum. The protein is Flagellar assembly factor FliW of Caldicellulosiruptor saccharolyticus (strain ATCC 43494 / DSM 8903 / Tp8T 6331).